The sequence spans 226 residues: Eukaryotic translation initiation factor 3 subunit K (226 aa).

Residues tyrosine 42 to phenylalanine 200 enclose the PCI domain.

Belongs to the eIF-3 subunit K family. As to quaternary structure, component of the eukaryotic translation initiation factor 3 (eIF-3) complex.

The protein resides in the cytoplasm. Its function is as follows. Component of the eukaryotic translation initiation factor 3 (eIF-3) complex, which is involved in protein synthesis of a specialized repertoire of mRNAs and, together with other initiation factors, stimulates binding of mRNA and methionyl-tRNAi to the 40S ribosome. The eIF-3 complex specifically targets and initiates translation of a subset of mRNAs involved in cell proliferation. The protein is Eukaryotic translation initiation factor 3 subunit K (TIF3K1) of Oryza sativa subsp. japonica (Rice).